Consider the following 362-residue polypeptide: PDZ and LIM domain protein 3 (362 aa).

The region spanning 1–84 (MPQNVVLPGP…QLCLKIDRAE (84 aa)) is the PDZ domain. Residues Ser18, Ser92, and Ser263 each carry the phosphoserine modification. Positions 261–282 (DGSDDRPAGTRSVRPVTKVHGG) are disordered. Residues 290–349 (PLCDKCGSGIVGAVVKARDKYRHPECFVCADCNLNLKQKGYFFVEGELYCEMHARARTRP) form the LIM zinc-binding domain.

In terms of assembly, interacts with ACTN2. Forms a heterodimer with PDLIM4 (via LIM domain). Highly expressed in skeletal muscle and at low levels in the heart.

The protein localises to the cytoplasm. The protein resides in the myofibril. Its subcellular location is the sarcomere. It localises to the z line. May play a role in the organization of actin filament arrays within muscle cells. This Rattus norvegicus (Rat) protein is PDZ and LIM domain protein 3 (Pdlim3).